We begin with the raw amino-acid sequence, 561 residues long: MELETSVYRPNVAVYDSPDGVEVRGRYDQVFAKILTRDALGFVAELQREFRGHVRYAMECRREVKRRYNSGAVPGFDPSTKFIRDGEWVCASVPPAVADRRVEITGPVERKMIINALNSGAKVFMADFEDALSPSWENLMRGQVNLKDAVDGSITFNDKARNKVYKLNDQVAKLFVRPRGWHLPEAHILIDGEPATGCLVDFGLYFFHNYAKFRQTQGSGFGPFFYLPKMEHSREAKIWNSVFERAEKMAGIERGSIRATVLIETLPAVFQMNEILYELRDHSVGLNCGRWDYIFSYVKTFQAHPDRLLPDRVLVGMGQHFMRSYSDLLIRTCHKRGVHAMGGMAAQIPIRDDPKANEMALDLVKKDKLREVRAGHDGTWAAHPGLIPICMDAFSHMGNNPNQIKSMKRDDASAITEEDLLQIPRGVRTLEGLRLNTRVGIQYLAAWLTGSGSVPLYNLMEDAATAEISRVQNWQWIRYGVELDGDGLGVRVSKELFGRVVEEEMERIEKEVGKDKFKRGMYKEACKMFTKQCTAAELDDFLTLAVYDHIVAHYPINASRL.

Catalysis depends on R177, which acts as the Proton acceptor. The Proton donor role is filled by D462. The Microbody targeting signal signature appears at 559–561 (SRL).

The protein belongs to the malate synthase family.

It is found in the glyoxysome. The enzyme catalyses glyoxylate + acetyl-CoA + H2O = (S)-malate + CoA + H(+). It participates in carbohydrate metabolism; glyoxylate cycle; (S)-malate from isocitrate: step 2/2. This is Malate synthase, glyoxysomal from Brassica napus (Rape).